Here is a 236-residue protein sequence, read N- to C-terminus: MASSRFQSGFCPISSCPSLENFIERIKDACRFTLSAVLGTILSAVLTFFFALVGTLLGALTGALIGQETESGFIRGAAVGAISGAVFSIEVFESSLVLWKSNESRFGCLLYLIDVIVSLISGRLVRERIGPAMLSAVQSQMGAVDSTFEELSSIFDTGGSKGLTGDLVDKIPKIKITGKNNLDASGNKDSCSVCLQDFQLGETVRSLPHCHHMFHLPCIDNWLFRHGSCPMCRRDL.

The Lumenal, thylakoid portion of the chain corresponds to 1–44 (MASSRFQSGFCPISSCPSLENFIERIKDACRFTLSAVLGTILSA). Residues 45–65 (VLTFFFALVGTLLGALTGALI) form a helical membrane-spanning segment. The Stromal portion of the chain corresponds to 66–78 (GQETESGFIRGAA). A helical membrane pass occupies residues 79-99 (VGAISGAVFSIEVFESSLVLW). Topologically, residues 100-104 (KSNES) are lumenal, thylakoid. Residues 105–125 (RFGCLLYLIDVIVSLISGRLV) form a helical membrane-spanning segment. Residues 126-236 (RERIGPAMLS…GSCPMCRRDL (111 aa)) are Stromal-facing. An RING-type; atypical zinc finger spans residues 191 to 233 (CSVCLQDFQLGETVRSLPHCHHMFHLPCIDNWLFRHGSCPMCR).

Belongs to the RING-type zinc finger family. NIP subfamily. Interacts with RPOT2.

The protein resides in the plastid. It localises to the chloroplast thylakoid membrane. In terms of biological role, intrinsic thylakoid membrane protein that fixes RPOT2 on the stromal side of the thylakoid membrane. This Arabidopsis thaliana (Mouse-ear cress) protein is NEP1-interacting protein 1 (NIP1).